The chain runs to 232 residues: TIR domain-containing adapter molecule 2 (232 aa).

Basic and acidic residues predominate over residues 1–10 (MGIGKSKMDP). Residues 1–71 (MGIGKSKMDP…VEERPEEDTE (71 aa)) form a disordered region. Glycine 2 carries N-myristoyl glycine lipidation. The span at 19–29 (KSQSVDTSQSH) shows a compositional bias: polar residues. Basic and acidic residues predominate over residues 30 to 42 (HMSDSKQSEEISL). Residues 55 to 71 (PAEEQEGVEERPEEDTE) are compositionally biased toward acidic residues. Residues 70–226 (TEEEVFLKFV…AIWKETRNTV (157 aa)) form the TIR domain. Position 164 is a phosphotyrosine (tyrosine 164).

As to quaternary structure, homodimer. Interacts with TLR4, TICAM1, IRF3 and IRF7 in response to LPS. Interacts with IL1R1, IL1RAP, IRAK2, IRAK3 and TRAF6. Interacts with protein kinase-inactive mutants of IRAK1 and IRAK4. Isoform 1 interacts with isoform 2; the interaction occurs in late endosomes and disrupts the interaction between isoform 1 and TICAM1. Interacts with MYD88; the interaction decreases after IL-18 stimulation in a time-dependent manner. Interacts with IL18R1 and IL18RAP. Interacts with TLR2. Interacts with RAB11FIP2. Myristoylated. Required for membrane association which is critical for its ability to initiate efficient signaling. In terms of processing, phosphorylated by PRKCE in response to LPS. Phosphorylation is essential for its function. It is depleted from the membrane upon phosphorylation. Tyrosine phosphorylation is inhibited by phosphatase PTPN4.

It is found in the cytoplasm. Its subcellular location is the golgi apparatus. The protein localises to the cell membrane. The protein resides in the endoplasmic reticulum. It localises to the early endosome. It is found in the late endosome. Its subcellular location is the cell projection. The protein localises to the phagocytic cup. In terms of biological role, functions as a sorting adapter in different signaling pathways to facilitate downstream signaling leading to type I interferon induction. In TLR4 signaling, physically bridges TLR4 and TICAM1 and functionally transmits signal to TICAM1 in early endosomes after endocytosis of TLR4. In TLR2 signaling, physically bridges TLR2 and MYD88 and is required for the TLR2-dependent movement of MYD88 to endosomes following ligand engagement. Involved in IL-18 signaling and is proposed to function as a sorting adapter for MYD88 in IL-18 signaling during adaptive immune response. Forms a complex with RAB11FIP2 that is recruited to the phagosomes to promote the activation of the actin-regulatory GTPases RAC1 and CDC42 and subsequent phagocytosis of Gram-negative bacteria. The protein is TIR domain-containing adapter molecule 2 (TICAM2) of Bos taurus (Bovine).